The primary structure comprises 125 residues: MADIKAIAEQLVNLTVKEVSELATILKEEYGIEPAAAAVAVAAAPGAAGAAAEEEKTSFDVVLKSAGAAKLQVVKAVKEQCGLGLKEAKDLVDAAPSTVKEGVDKATAEALKKALEEAGAEVELK.

Belongs to the bacterial ribosomal protein bL12 family. As to quaternary structure, homodimer. Part of the ribosomal stalk of the 50S ribosomal subunit. Forms a multimeric L10(L12)X complex, where L10 forms an elongated spine to which 2 to 4 L12 dimers bind in a sequential fashion. Binds GTP-bound translation factors.

In terms of biological role, forms part of the ribosomal stalk which helps the ribosome interact with GTP-bound translation factors. Is thus essential for accurate translation. The protein is Large ribosomal subunit protein bL12 of Porphyromonas gingivalis (strain ATCC 33277 / DSM 20709 / CIP 103683 / JCM 12257 / NCTC 11834 / 2561).